Consider the following 164-residue polypeptide: FMN reductase (NADH) RutF (164 aa).

It belongs to the non-flavoprotein flavin reductase family. RutF subfamily.

The catalysed reaction is FMNH2 + NAD(+) = FMN + NADH + 2 H(+). In terms of biological role, catalyzes the reduction of FMN to FMNH2 which is used to reduce pyrimidine by RutA via the Rut pathway. The chain is FMN reductase (NADH) RutF from Enterobacter sp. (strain 638).